Here is a 360-residue protein sequence, read N- to C-terminus: Phospho-N-acetylmuramoyl-pentapeptide-transferase (360 aa).

Transmembrane regions (helical) follow at residues 26–46, 72–92, 94–114, 132–152, 168–188, 199–219, 236–256, 263–283, 288–308, and 338–358; these read AIVS…RMIA, PTMG…LWAY, SNPY…IGFV, WKYF…YLAG, VMPQ…VGTG, GLAI…AWAT, AGEL…FLWF, VFMG…IAVL, FLLV…ILQV, and VIVR…ATLK.

The protein belongs to the glycosyltransferase 4 family. MraY subfamily. Mg(2+) serves as cofactor.

The protein localises to the cell inner membrane. It carries out the reaction UDP-N-acetyl-alpha-D-muramoyl-L-alanyl-gamma-D-glutamyl-meso-2,6-diaminopimeloyl-D-alanyl-D-alanine + di-trans,octa-cis-undecaprenyl phosphate = di-trans,octa-cis-undecaprenyl diphospho-N-acetyl-alpha-D-muramoyl-L-alanyl-D-glutamyl-meso-2,6-diaminopimeloyl-D-alanyl-D-alanine + UMP. Its pathway is cell wall biogenesis; peptidoglycan biosynthesis. Catalyzes the initial step of the lipid cycle reactions in the biosynthesis of the cell wall peptidoglycan: transfers peptidoglycan precursor phospho-MurNAc-pentapeptide from UDP-MurNAc-pentapeptide onto the lipid carrier undecaprenyl phosphate, yielding undecaprenyl-pyrophosphoryl-MurNAc-pentapeptide, known as lipid I. The chain is Phospho-N-acetylmuramoyl-pentapeptide-transferase from Klebsiella pneumoniae (strain 342).